The chain runs to 91 residues: Cell division topological specificity factor (91 aa).

It belongs to the MinE family.

Functionally, prevents the cell division inhibition by proteins MinC and MinD at internal division sites while permitting inhibition at polar sites. This ensures cell division at the proper site by restricting the formation of a division septum at the midpoint of the long axis of the cell. This is Cell division topological specificity factor from Thermoanaerobacter pseudethanolicus (strain ATCC 33223 / 39E) (Clostridium thermohydrosulfuricum).